The following is a 516-amino-acid chain: Probable malate:quinone oxidoreductase (516 aa).

Belongs to the MQO family. The cofactor is FAD.

The enzyme catalyses (S)-malate + a quinone = a quinol + oxaloacetate. It functions in the pathway carbohydrate metabolism; tricarboxylic acid cycle; oxaloacetate from (S)-malate (quinone route): step 1/1. In Mycobacterium sp. (strain MCS), this protein is Probable malate:quinone oxidoreductase.